The following is an 83-amino-acid chain: Cytochrome b559 subunit alpha (83 aa).

A helical transmembrane segment spans residues 21–35 (VIHSITIPSLFIAGW). Histidine 23 is a binding site for heme.

Belongs to the PsbE/PsbF family. In terms of assembly, heterodimer of an alpha subunit and a beta subunit. PSII is composed of 1 copy each of membrane proteins PsbA, PsbB, PsbC, PsbD, PsbE, PsbF, PsbH, PsbI, PsbJ, PsbK, PsbL, PsbM, PsbT, PsbX, PsbY, PsbZ, Psb30/Ycf12, at least 3 peripheral proteins of the oxygen-evolving complex and a large number of cofactors. It forms dimeric complexes. Heme b serves as cofactor.

It localises to the plastid. Its subcellular location is the chloroplast thylakoid membrane. Its function is as follows. This b-type cytochrome is tightly associated with the reaction center of photosystem II (PSII). PSII is a light-driven water:plastoquinone oxidoreductase that uses light energy to abstract electrons from H(2)O, generating O(2) and a proton gradient subsequently used for ATP formation. It consists of a core antenna complex that captures photons, and an electron transfer chain that converts photonic excitation into a charge separation. The protein is Cytochrome b559 subunit alpha of Chlorella vulgaris (Green alga).